We begin with the raw amino-acid sequence, 259 residues long: Global transcriptional regulator CodY (259 aa).

Positions 1 to 155 (MELLAKTRKL…SSTVVGMEIL (155 aa)) are GAF domain. Positions 203–222 (ASKIADRVGITRSVIVNALR) form a DNA-binding region, H-T-H motif. Residue S215 is modified to Phosphoserine.

This sequence belongs to the CodY family.

The protein localises to the cytoplasm. In terms of biological role, DNA-binding global transcriptional regulator which is involved in the adaptive response to starvation and acts by directly or indirectly controlling the expression of numerous genes in response to nutrient availability. During rapid exponential growth, CodY is highly active and represses genes whose products allow adaptation to nutrient depletion. This is Global transcriptional regulator CodY from Bacillus mycoides (strain KBAB4) (Bacillus weihenstephanensis).